We begin with the raw amino-acid sequence, 321 residues long: Auxin-responsive protein IAA8 (321 aa).

An EAR-like (transcriptional repression) motif is present at residues 54-58 (LRLGL). Positions 199-301 (VLFVKVSMDG…TCQKLKIMKG (103 aa)) constitute a PB1 domain.

It belongs to the Aux/IAA family. As to quaternary structure, homodimers and heterodimers. Interacts with TPL. As to expression, highly expressed in the whole plant.

It localises to the nucleus. Its function is as follows. Aux/IAA proteins are short-lived transcriptional factors that function as repressors of early auxin response genes at low auxin concentrations. Repression is thought to result from the interaction with auxin response factors (ARFs), proteins that bind to the auxin-responsive promoter element (AuxRE). Formation of heterodimers with ARF proteins may alter their ability to modulate early auxin response genes expression. This is Auxin-responsive protein IAA8 (IAA8) from Arabidopsis thaliana (Mouse-ear cress).